Reading from the N-terminus, the 334-residue chain is tRNA-dihydrouridine synthase B (334 aa).

FMN is bound by residues 16–18 and Gln70; that span reads PMA. Cys100 acts as the Proton donor in catalysis. FMN-binding positions include Lys139, 200–202, and 224–225; these read NGD and GR.

The protein belongs to the Dus family. DusB subfamily. FMN serves as cofactor.

The catalysed reaction is a 5,6-dihydrouridine in tRNA + NAD(+) = a uridine in tRNA + NADH + H(+). It carries out the reaction a 5,6-dihydrouridine in tRNA + NADP(+) = a uridine in tRNA + NADPH + H(+). Functionally, catalyzes the synthesis of 5,6-dihydrouridine (D), a modified base found in the D-loop of most tRNAs, via the reduction of the C5-C6 double bond in target uridines. The polypeptide is tRNA-dihydrouridine synthase B (Serratia marcescens).